A 144-amino-acid chain; its full sequence is Large ribosomal subunit protein uL16 (144 aa).

It belongs to the universal ribosomal protein uL16 family. Part of the 50S ribosomal subunit.

Binds 23S rRNA and is also seen to make contacts with the A and possibly P site tRNAs. The chain is Large ribosomal subunit protein uL16 from Heliobacterium modesticaldum (strain ATCC 51547 / Ice1).